Reading from the N-terminus, the 572-residue chain is Myb-like protein Y (572 aa).

Positions 196 to 211 (QSQSQLPTATNNNNKQ) are enriched in polar residues. Residues 196 to 283 (QSQSQLPTAT…NNNNNNNNNE (88 aa)) are disordered. 2 stretches are compositionally biased toward low complexity: residues 222 to 237 (TATA…TTTT) and 260 to 281 (NDNN…NNNN). The region spanning 311–360 (PWTVEDQKKLEDALTKYPPSRFSSVSRWQMVSKELGISPKAVALRYNQML) is the Myb-like domain. The disordered stretch occupies residues 367 to 456 (KPSLQQQQQQ…TTVTPNMTTP (90 aa)). 2 stretches are compositionally biased toward low complexity: residues 371–392 (QQQQ…TTTT) and 414–425 (SSFSSPSSSSKE). Residues 426 to 435 (SPNKKEKTTH) show a composition bias toward basic and acidic residues. The span at 436 to 455 (DTTTTTNTATTTTVTPNMTT) shows a compositional bias: low complexity.

The protein is Myb-like protein Y (mybY) of Dictyostelium discoideum (Social amoeba).